The sequence spans 140 residues: Sex-regulated protein janus-B (140 aa).

R42 provides a ligand contact to substrate. H69 acts as the Proton acceptor in catalysis. 110 to 112 (SRT) contributes to the substrate binding site.

Belongs to the janus family.

JanA and janB regulate somatic sex differentiation. The protein is Sex-regulated protein janus-B (janB) of Drosophila teissieri (Fruit fly).